The primary structure comprises 370 residues: Aminomethyltransferase (370 aa).

Belongs to the GcvT family. In terms of assembly, the glycine cleavage system is composed of four proteins: P, T, L and H.

The catalysed reaction is N(6)-[(R)-S(8)-aminomethyldihydrolipoyl]-L-lysyl-[protein] + (6S)-5,6,7,8-tetrahydrofolate = N(6)-[(R)-dihydrolipoyl]-L-lysyl-[protein] + (6R)-5,10-methylene-5,6,7,8-tetrahydrofolate + NH4(+). In terms of biological role, the glycine cleavage system catalyzes the degradation of glycine. The protein is Aminomethyltransferase of Leptospira biflexa serovar Patoc (strain Patoc 1 / Ames).